Consider the following 507-residue polypeptide: Alkyl hydroperoxide reductase subunit F (507 aa).

An FAD-binding site is contributed by 207 to 222 (DVLIVGGGPASGSAAI). Cysteines 335 and 338 form a disulfide. 347-361 (DVAVIGGGNSGVEAA) contacts NAD(+). Residue 467 to 477 (TNVPGIFAAGD) participates in FAD binding.

This sequence belongs to the class-II pyridine nucleotide-disulfide oxidoreductase family. In terms of assembly, homodimer. Requires FAD as cofactor.

Serves to protect the cell against DNA damage by alkyl hydroperoxides. It can use either NADH or NADPH as electron donor for direct reduction of redox dyes or of alkyl hydroperoxides when combined with the AhpC protein. The chain is Alkyl hydroperoxide reductase subunit F (ahpF) from Staphylococcus epidermidis (strain ATCC 35984 / DSM 28319 / BCRC 17069 / CCUG 31568 / BM 3577 / RP62A).